The primary structure comprises 340 residues: Cathepsin B (340 aa).

The first 17 residues, 1–17, serve as a signal peptide directing secretion; that stretch reads MSWSRSILCLLGAFANA. Residues 18–79 constitute a propeptide, activation peptide; the sequence is RSIPYYPPLS…ERVDFAEDMD (62 aa). Asparagine 38 is a glycosylation site (N-linked (GlcNAc...) asparagine). Intrachain disulfides connect cysteine 93/cysteine 122, cysteine 105/cysteine 150, cysteine 141/cysteine 208, cysteine 142/cysteine 146, cysteine 179/cysteine 212, and cysteine 187/cysteine 198. The active site involves cysteine 108. Asparagine 192 carries an N-linked (GlcNAc...) asparagine glycan. Catalysis depends on residues histidine 279 and asparagine 299.

This sequence belongs to the peptidase C1 family. In terms of assembly, dimer of a heavy chain and a light chain cross-linked by a disulfide bond.

It localises to the lysosome. The catalysed reaction is Hydrolysis of proteins with broad specificity for peptide bonds. Preferentially cleaves -Arg-Arg-|-Xaa bonds in small molecule substrates (thus differing from cathepsin L). In addition to being an endopeptidase, shows peptidyl-dipeptidase activity, liberating C-terminal dipeptides.. Functionally, thiol protease which is believed to participate in intracellular degradation and turnover of proteins. Has also been implicated in tumor invasion and metastasis. In Gallus gallus (Chicken), this protein is Cathepsin B (CTSB).